We begin with the raw amino-acid sequence, 244 residues long: 2-C-methyl-D-erythritol 4-phosphate cytidylyltransferase (244 aa).

The protein belongs to the IspD/TarI cytidylyltransferase family. IspD subfamily.

The catalysed reaction is 2-C-methyl-D-erythritol 4-phosphate + CTP + H(+) = 4-CDP-2-C-methyl-D-erythritol + diphosphate. It functions in the pathway isoprenoid biosynthesis; isopentenyl diphosphate biosynthesis via DXP pathway; isopentenyl diphosphate from 1-deoxy-D-xylulose 5-phosphate: step 2/6. Its function is as follows. Catalyzes the formation of 4-diphosphocytidyl-2-C-methyl-D-erythritol from CTP and 2-C-methyl-D-erythritol 4-phosphate (MEP). The sequence is that of 2-C-methyl-D-erythritol 4-phosphate cytidylyltransferase from Corynebacterium diphtheriae (strain ATCC 700971 / NCTC 13129 / Biotype gravis).